We begin with the raw amino-acid sequence, 304 residues long: Acetylglutamate kinase (304 aa).

Substrate-binding positions include Gly75–Gly76, Arg97, and Asn196.

The protein belongs to the acetylglutamate kinase family. ArgB subfamily.

The protein localises to the cytoplasm. The enzyme catalyses N-acetyl-L-glutamate + ATP = N-acetyl-L-glutamyl 5-phosphate + ADP. It functions in the pathway amino-acid biosynthesis; L-arginine biosynthesis; N(2)-acetyl-L-ornithine from L-glutamate: step 2/4. Catalyzes the ATP-dependent phosphorylation of N-acetyl-L-glutamate. The polypeptide is Acetylglutamate kinase (Corynebacterium urealyticum (strain ATCC 43042 / DSM 7109)).